We begin with the raw amino-acid sequence, 64 residues long: Large ribosomal subunit protein bL35 (64 aa).

Residues 1 to 23 (MPKMKTKSGAAKRFKKTANGFKH) are disordered.

It belongs to the bacterial ribosomal protein bL35 family.

This is Large ribosomal subunit protein bL35 from Stutzerimonas stutzeri (strain A1501) (Pseudomonas stutzeri).